A 191-amino-acid chain; its full sequence is UPF0312 protein Shewana3_1179 (191 aa).

The signal sequence occupies residues Met-1–Ala-22.

This sequence belongs to the UPF0312 family. Type 1 subfamily.

It is found in the periplasm. This is UPF0312 protein Shewana3_1179 from Shewanella sp. (strain ANA-3).